Consider the following 128-residue polypeptide: Transcription antitermination protein NusB (128 aa).

The protein belongs to the NusB family.

In terms of biological role, involved in transcription antitermination. Required for transcription of ribosomal RNA (rRNA) genes. Binds specifically to the boxA antiterminator sequence of the ribosomal RNA (rrn) operons. This Listeria welshimeri serovar 6b (strain ATCC 35897 / DSM 20650 / CCUG 15529 / CIP 8149 / NCTC 11857 / SLCC 5334 / V8) protein is Transcription antitermination protein NusB.